Here is an 819-residue protein sequence, read N- to C-terminus: LPS-assembly protein LptD (819 aa).

Residues methionine 1 to alanine 33 form the signal peptide.

This sequence belongs to the LptD family. In terms of assembly, component of the lipopolysaccharide transport and assembly complex. Interacts with LptE and LptA.

The protein localises to the cell outer membrane. Its function is as follows. Together with LptE, is involved in the assembly of lipopolysaccharide (LPS) at the surface of the outer membrane. The polypeptide is LPS-assembly protein LptD (Acinetobacter baylyi (strain ATCC 33305 / BD413 / ADP1)).